A 374-amino-acid polypeptide reads, in one-letter code: 4-hydroxy-3-methylbut-2-en-1-yl diphosphate synthase (flavodoxin) (374 aa).

Positions 268, 271, 303, and 310 each coordinate [4Fe-4S] cluster.

This sequence belongs to the IspG family. Requires [4Fe-4S] cluster as cofactor.

The enzyme catalyses (2E)-4-hydroxy-3-methylbut-2-enyl diphosphate + oxidized [flavodoxin] + H2O + 2 H(+) = 2-C-methyl-D-erythritol 2,4-cyclic diphosphate + reduced [flavodoxin]. Its pathway is isoprenoid biosynthesis; isopentenyl diphosphate biosynthesis via DXP pathway; isopentenyl diphosphate from 1-deoxy-D-xylulose 5-phosphate: step 5/6. Converts 2C-methyl-D-erythritol 2,4-cyclodiphosphate (ME-2,4cPP) into 1-hydroxy-2-methyl-2-(E)-butenyl 4-diphosphate. The chain is 4-hydroxy-3-methylbut-2-en-1-yl diphosphate synthase (flavodoxin) from Geobacillus kaustophilus (strain HTA426).